We begin with the raw amino-acid sequence, 144 residues long: Snaclec 6 (144 aa).

The signal sequence occupies residues 1 to 23; the sequence is MGRFISVSFGLLVVFLSLSGTGA. 3 cysteine pairs are disulfide-bonded: cysteine 25–cysteine 36, cysteine 53–cysteine 142, and cysteine 119–cysteine 134. Positions 32-143 constitute a C-type lectin domain; that stretch reads HEGHCYKVFK…CNFIAPVVCK (112 aa).

It belongs to the snaclec family. As to quaternary structure, heterodimer; disulfide-linked.

It localises to the secreted. Its function is as follows. Interferes with one step of hemostasis (modulation of platelet aggregation, or coagulation cascade, for example). This is Snaclec 6 from Daboia siamensis (Eastern Russel's viper).